The following is a 524-amino-acid chain: Light-independent protochlorophyllide reductase subunit B (524 aa).

Aspartate 36 lines the [4Fe-4S] cluster pocket. The active-site Proton donor is aspartate 290. 425-426 (GL) is a substrate binding site.

Belongs to the ChlB/BchB/BchZ family. In terms of assembly, protochlorophyllide reductase is composed of three subunits; ChlL, ChlN and ChlB. Forms a heterotetramer of two ChlB and two ChlN subunits. The cofactor is [4Fe-4S] cluster.

The catalysed reaction is chlorophyllide a + oxidized 2[4Fe-4S]-[ferredoxin] + 2 ADP + 2 phosphate = protochlorophyllide a + reduced 2[4Fe-4S]-[ferredoxin] + 2 ATP + 2 H2O. It participates in porphyrin-containing compound metabolism; chlorophyll biosynthesis (light-independent). Component of the dark-operative protochlorophyllide reductase (DPOR) that uses Mg-ATP and reduced ferredoxin to reduce ring D of protochlorophyllide (Pchlide) to form chlorophyllide a (Chlide). This reaction is light-independent. The NB-protein (ChlN-ChlB) is the catalytic component of the complex. This is Light-independent protochlorophyllide reductase subunit B from Parasynechococcus marenigrum (strain WH8102).